The sequence spans 1031 residues: Kinesin heavy chain (1031 aa).

Positions 8–325 (NIKVVCRVRP…LMFGQRAKTI (318 aa)) constitute a Kinesin motor domain. An ATP-binding site is contributed by 84-91 (GQTSSGKT). The stretch at 393–857 (PKQMTVHVSE…RDNADLRCEL (465 aa)) forms a coiled coil. Over residues 673–686 (TDQEDKKREEEDKM) the composition is skewed to basic and acidic residues. Disordered stretches follow at residues 673–692 (TDQE…ATEM) and 906–1031 (RNFA…EQGS). The interval 858–1031 (PKLERRLRAT…PLTTSGEQGS (174 aa)) is globular. Over residues 932–949 (GSTGIRGGGYSGIRGGGS) the composition is skewed to gly residues. 2 stretches are compositionally biased toward polar residues: residues 964 to 977 (SHNN…NPND) and 1014 to 1031 (RNNT…EQGS).

This sequence belongs to the TRAFAC class myosin-kinesin ATPase superfamily. Kinesin family. Kinesin subfamily. As to quaternary structure, oligomer composed of two heavy chains and two light chains.

The protein localises to the cytoplasm. It is found in the cytoskeleton. In terms of biological role, kinesin is a microtubule-associated force-producing protein that may play a role in organelle transport. This Strongylocentrotus purpuratus (Purple sea urchin) protein is Kinesin heavy chain.